The chain runs to 617 residues: MASIQPAGSSAPSSNINSPILPPSGTPFFNGPLSDTNTRSSPAPASNASAQTDGPRSKRNKRDSRKKREAKGLDQEIVPAKKRATAVQNTALPSSDLNILRPLLLAEPRPSDLLPPQPRQLNLVSRKTSEVIGQSWSFYEVVDKLTNKNGFRYSYAIADTSFPHIKYRQTDVRPYNARFSFEDSPAAILFNEDALAVTTNGPWHTARANVCAREGTFYYEARIISGVLSDPQTAPANGKSCLPSRGHVRLGFARREADLDVNVGVDCYGYGIRDVNGEVVNRMRCEYFFPKGESIREGDVIGMLITLPPLSLHKRIVEGTYDPAVDGHASTSGIELSMATNVIRDRIPFHYKSDFCWQQSNVFPTKQLRDYAFNLKETPTFGPPSPMNTEDASLRTLPGSSITIFKNGIKMGTPFKELYAFLPPASRLANGTNNLGLGERENADDGMIGYYPAVSCYGGGAVECRFEGPWWIGPPQAENGEPIRGIGERFNEQIVEDVVADIVDEVEAMLVWGGVDGDVVGNAQMDGTGTGAVGGSEVLKGGVGAAYESAVSAVSAGPGTGPSTVENSVGNVGSPDVGTGHSTFEDAASVGVVGTPNTEEPAARPENITVGHDVEMS.

Low complexity-rich tracts occupy residues 1–19 (MASI…INSP) and 40–50 (SSPAPASNASA). The tract at residues 1-89 (MASIQPAGSS…AKKRATAVQN (89 aa)) is disordered. Residues 57-69 (SKRNKRDSRKKRE) show a composition bias toward basic residues. Positions 157 to 380 (IADTSFPHIK…YAFNLKETPT (224 aa)) constitute a B30.2/SPRY domain. Residues 595-617 (TPNTEEPAARPENITVGHDVEMS) form a disordered region.

This sequence belongs to the cclA family. In terms of assembly, component of the COMPASS complex.

It localises to the nucleus. The protein resides in the chromosome. Its subcellular location is the telomere. In terms of biological role, component of the COMPASS (Set1C) complex that specifically mono-, di- and trimethylates histone H3 to form H3K4me1/2/3, which subsequently plays a role in telomere length maintenance and transcription elongation regulation. Controls the production of several secondary metabolites, including astellolides. The polypeptide is COMPASS component cclA (Aspergillus oryzae (strain ATCC 42149 / RIB 40) (Yellow koji mold)).